The primary structure comprises 126 residues: Aspartate 1-decarboxylase (126 aa).

The Schiff-base intermediate with substrate; via pyruvic acid role is filled by Ser25. Position 25 is a pyruvic acid (Ser) (Ser25). Position 57 (Thr57) interacts with substrate. The Proton donor role is filled by Tyr58. 73–75 (GAA) is a binding site for substrate.

The protein belongs to the PanD family. As to quaternary structure, heterooctamer of four alpha and four beta subunits. It depends on pyruvate as a cofactor. Post-translationally, is synthesized initially as an inactive proenzyme, which is activated by self-cleavage at a specific serine bond to produce a beta-subunit with a hydroxyl group at its C-terminus and an alpha-subunit with a pyruvoyl group at its N-terminus.

It is found in the cytoplasm. The enzyme catalyses L-aspartate + H(+) = beta-alanine + CO2. The protein operates within cofactor biosynthesis; (R)-pantothenate biosynthesis; beta-alanine from L-aspartate: step 1/1. In terms of biological role, catalyzes the pyruvoyl-dependent decarboxylation of aspartate to produce beta-alanine. The protein is Aspartate 1-decarboxylase of Methylobacillus flagellatus (strain ATCC 51484 / DSM 6875 / VKM B-1610 / KT).